We begin with the raw amino-acid sequence, 636 residues long: Rust resistance kinase Lr10 (636 aa).

Positions M1 to A24 are cleaved as a signal peptide. Over W25–K276 the chain is Extracellular. Residues N56, N177, and N222 are each glycosylated (N-linked (GlcNAc...) asparagine). A helical membrane pass occupies residues V277–V297. Topologically, residues L298–S636 are cytoplasmic. One can recognise a Protein kinase domain in the interval R339–V628. ATP contacts are provided by residues V345–V353 and K367. The Proton acceptor role is filled by D466.

The protein belongs to the protein kinase superfamily. Ser/Thr protein kinase family. Specifically expressed in the aerial parts of the plant.

The protein localises to the cell membrane. The enzyme catalyses L-seryl-[protein] + ATP = O-phospho-L-seryl-[protein] + ADP + H(+). The catalysed reaction is L-threonyl-[protein] + ATP = O-phospho-L-threonyl-[protein] + ADP + H(+). This Triticum aestivum (Wheat) protein is Rust resistance kinase Lr10.